The primary structure comprises 157 residues: SUMO-conjugating enzyme UBC9-B (157 aa).

One can recognise a UBC core domain in the interval 4–157 (IALSRLAQER…VRAQAKKFSP (154 aa)). The segment at 13 to 18 (RKAWRK) is interaction with SUMO1. Catalysis depends on C93, which acts as the Glycyl thioester intermediate.

This sequence belongs to the ubiquitin-conjugating enzyme family. In terms of assembly, forms a tight complex with rangap1 and ranbp2. Interacts with vsx1.

Its subcellular location is the nucleus. It participates in protein modification; protein sumoylation. Functionally, accepts the ubiquitin-like proteins sumo1, sumo2 and sumo3 from the uble1a-uble1b E1 complex and catalyzes their covalent attachment to other proteins with the help of an E3 ligase such as ranbp2 or cbx4. Essential for nuclear architecture and chromosome segregation. Mediates nuclear localization of vsx1. Required for progression through mitosis during organogenesis. The protein is SUMO-conjugating enzyme UBC9-B (ube2ib) of Danio rerio (Zebrafish).